The sequence spans 209 residues: 3-hexulose-6-phosphate synthase (209 aa).

The protein belongs to the HPS/KGPDC family. HPS subfamily. As to quaternary structure, homodimer.

It carries out the reaction D-ribulose 5-phosphate + formaldehyde = D-arabino-hex-3-ulose 6-phosphate. It participates in one-carbon metabolism; formaldehyde assimilation via RuMP pathway; D-fructose 6-phosphate from D-ribulose 5-phosphate and formaldehyde: step 1/2. Its function is as follows. Catalyzes the condensation of ribulose 5-phosphate with formaldehyde to form 3-hexulose 6-phosphate. In Methylomonas aminofaciens, this protein is 3-hexulose-6-phosphate synthase (rmpA).